Reading from the N-terminus, the 149-residue chain is Putative pre-16S rRNA nuclease (149 aa).

Belongs to the YqgF nuclease family.

Its subcellular location is the cytoplasm. Its function is as follows. Could be a nuclease involved in processing of the 5'-end of pre-16S rRNA. In Synechococcus elongatus (strain ATCC 33912 / PCC 7942 / FACHB-805) (Anacystis nidulans R2), this protein is Putative pre-16S rRNA nuclease.